We begin with the raw amino-acid sequence, 155 residues long: Transcriptional repressor NrdR (155 aa).

Residues 3-34 (CPNCHQNASRVIDSRPTDEGRTIRRRRECENC) fold into a zinc finger. Residues 49-139 (LLVIKNDGTR…IYRQFTDMSS (91 aa)) form the ATP-cone domain.

Belongs to the NrdR family. Zn(2+) serves as cofactor.

Functionally, negatively regulates transcription of bacterial ribonucleotide reductase nrd genes and operons by binding to NrdR-boxes. The protein is Transcriptional repressor NrdR of Lactobacillus delbrueckii subsp. bulgaricus (strain ATCC 11842 / DSM 20081 / BCRC 10696 / JCM 1002 / NBRC 13953 / NCIMB 11778 / NCTC 12712 / WDCM 00102 / Lb 14).